The chain runs to 118 residues: NAD(P)H-quinone oxidoreductase subunit M (118 aa).

It belongs to the complex I NdhM subunit family. As to quaternary structure, NDH-1 can be composed of about 15 different subunits; different subcomplexes with different compositions have been identified which probably have different functions.

The protein localises to the cellular thylakoid membrane. It carries out the reaction a plastoquinone + NADH + (n+1) H(+)(in) = a plastoquinol + NAD(+) + n H(+)(out). It catalyses the reaction a plastoquinone + NADPH + (n+1) H(+)(in) = a plastoquinol + NADP(+) + n H(+)(out). Its function is as follows. NDH-1 shuttles electrons from an unknown electron donor, via FMN and iron-sulfur (Fe-S) centers, to quinones in the respiratory and/or the photosynthetic chain. The immediate electron acceptor for the enzyme in this species is believed to be plastoquinone. Couples the redox reaction to proton translocation, and thus conserves the redox energy in a proton gradient. Cyanobacterial NDH-1 also plays a role in inorganic carbon-concentration. This Trichormus variabilis (strain ATCC 29413 / PCC 7937) (Anabaena variabilis) protein is NAD(P)H-quinone oxidoreductase subunit M.